A 602-amino-acid chain; its full sequence is Alpha-glucosides permease MPH3 (602 aa).

The Cytoplasmic portion of the chain corresponds to 1 to 106 (MKNLSFLINR…AAAWSLLVST (106 aa)). The helical transmembrane segment at 107–127 (TLIMEGYDTAILGAFYALPIF) threads the bilayer. Topologically, residues 128 to 142 (QRKFGSQNDKTGEWE) are extracellular. The chain crosses the membrane as a helical span at residues 143–163 (ISASWQIGLTLCYMAGEIVGL). Residues 164 to 178 (QLTGPSVDLVGNRYT) lie on the Cytoplasmic side of the membrane. The chain crosses the membrane as a helical span at residues 179 to 199 (LIIALFFLAAFTFILYFCNSL). Position 200 (Gly200) is a topological domain, extracellular. Residues 201 to 221 (MIAVGQALCGMPWGCFQCLTV) traverse the membrane as a helical segment. Residues 222-234 (SYASEICPLALRY) lie on the Cytoplasmic side of the membrane. A helical membrane pass occupies residues 235 to 255 (YLTTYSNLCWLFGQLFAAGIM). Over 256–270 (KNSQKKYADSELGYK) the chain is Extracellular. A helical transmembrane segment spans residues 271-291 (LPFALQWILPVPLALGIFFAP). The Cytoplasmic segment spans residues 292–363 (ESPWWLVKKG…EDKINRRRTR (72 aa)). A helical membrane pass occupies residues 364 to 384 (ITCLCWAGQATCGSILIGYST). The Extracellular segment spans residues 385-397 (YFYEKAGVSTEMS). The helical transmembrane segment at 398–418 (FTFSIIQYCLGICATFLSWWA) threads the bilayer. Residues 419 to 426 (SKYFGRYD) lie on the Cytoplasmic side of the membrane. The chain crosses the membrane as a helical span at residues 427-447 (LYAFGLAFQTIVFFIIGGLGC). Over 448-459 (SSTHGSKMGSGS) the chain is Extracellular. The helical transmembrane segment at 460–480 (LLMAVAFFYNLGIAPVVFCLV) threads the bilayer. Residues 481–492 (SEMPSSRLRTKT) are Cytoplasmic-facing. The helical transmembrane segment at 493-513 (IILARNTYNVVSIICSVLILY) threads the bilayer. At 514 to 525 (QLNSKKWNWGAK) the chain is on the extracellular side. A helical transmembrane segment spans residues 526–546 (SGFFWGVLCFCTLIWAVVDLP). Over 547–602 (ETAGKTFVEINELFKLGVSARKFKSTKVDPFVVKNPPKDVSHNDPKGDIEASIAEE) the chain is Cytoplasmic. The tract at residues 580-602 (KNPPKDVSHNDPKGDIEASIAEE) is disordered. A compositionally biased stretch (basic and acidic residues) spans 582-595 (PPKDVSHNDPKGDI).

The protein belongs to the major facilitator superfamily. Sugar transporter (TC 2.A.1.1) family.

The protein localises to the cell membrane. High-affinity uptake of maltose and maltotriose. Also transports alpha-methylglucoside, glucose and turanose but not melezitose or trehalose. The chain is Alpha-glucosides permease MPH3 (MPH3) from Saccharomyces cerevisiae (strain AWRI1631) (Baker's yeast).